The following is a 270-amino-acid chain: CASP-like protein 4A1 (270 aa).

The segment at 1–110 (MEELEKTQKF…PSFSSSSSTP (110 aa)) is disordered. Residues 1–121 (MEELEKTQKF…ESKWASLIRK (121 aa)) are Cytoplasmic-facing. Positions 24 to 66 (SSPINFEMSSRSSLHSLPQTTIESPPDSPTLSSIPDSHGSSPH) are enriched in polar residues. Positions 85–97 (NGEEEKKVSESRR) are enriched in basic and acidic residues. Positions 100–110 (RPSFSSSSSTP) are enriched in low complexity. The helical transmembrane segment at 122–142 (ALLGFRVIAFVSCLVSFSVMV) threads the bilayer. The Extracellular portion of the chain corresponds to 143 to 161 (SDRDKGWAHDSFYNYKEFR). A helical membrane pass occupies residues 162 to 182 (FCLAANVIGFVYSGFMICDLV). The Cytoplasmic segment spans residues 183 to 198 (YLLSTSIRRSRHNLRH). Residues 199-221 (FLEFGLDQMLAYLLASASTSASI) form a helical membrane-spanning segment. Over 222–246 (RVDDWQSNWGADKFPDLARASVALS) the chain is Extracellular. A helical membrane pass occupies residues 247 to 267 (YVSFVAFAFCSLASGYALCAL). At 268–270 (RSI) the chain is on the cytoplasmic side.

The protein belongs to the Casparian strip membrane proteins (CASP) family. As to quaternary structure, homodimer and heterodimers.

It is found in the cell membrane. The sequence is that of CASP-like protein 4A1 from Arabidopsis thaliana (Mouse-ear cress).